Reading from the N-terminus, the 147-residue chain is MELHSLKAAEGSRKVRNRVGRGTSSGNGKTSGRGQKGQKSRSGGGVRPGFEGGQTELFRRMPKRGFLNVNRKEYAIVNLETLNRLEDGATVSAETLVAAKIIKDVKSGVKVLANGELTAKKLTVKVAKVSAAAKAAIEAAGGSVEEA.

Over residues 1-13 the composition is skewed to basic and acidic residues; the sequence is MELHSLKAAEGSR. A disordered region spans residues 1–57; sequence MELHSLKAAEGSRKVRNRVGRGTSSGNGKTSGRGQKGQKSRSGGGVRPGFEGGQTEL. 2 stretches are compositionally biased toward gly residues: residues 23-35 and 42-52; these read TSSG…GRGQ and SGGGVRPGFEG.

It belongs to the universal ribosomal protein uL15 family. As to quaternary structure, part of the 50S ribosomal subunit.

Binds to the 23S rRNA. In Lactococcus lactis subsp. lactis (strain IL1403) (Streptococcus lactis), this protein is Large ribosomal subunit protein uL15.